The chain runs to 430 residues: Adenylosuccinate synthetase (430 aa).

GTP-binding positions include 13 to 19 and 41 to 43; these read GDEGKGK and GHT. Catalysis depends on Asp-14, which acts as the Proton acceptor. 2 residues coordinate Mg(2+): Asp-14 and Gly-41. IMP is bound by residues 14–17, 39–42, Thr-130, Arg-144, Gln-225, Thr-240, and Arg-304; these read DEGK and NAGH. His-42 (proton donor) is an active-site residue. 300–306 provides a ligand contact to substrate; the sequence is STTGRAR. GTP-binding positions include Arg-306, 332–334, and 414–416; these read KLD and STG.

It belongs to the adenylosuccinate synthetase family. As to quaternary structure, homodimer. Mg(2+) is required as a cofactor.

The protein localises to the cytoplasm. The catalysed reaction is IMP + L-aspartate + GTP = N(6)-(1,2-dicarboxyethyl)-AMP + GDP + phosphate + 2 H(+). Its pathway is purine metabolism; AMP biosynthesis via de novo pathway; AMP from IMP: step 1/2. Its function is as follows. Plays an important role in the de novo pathway of purine nucleotide biosynthesis. Catalyzes the first committed step in the biosynthesis of AMP from IMP. This Thioalkalivibrio sulfidiphilus (strain HL-EbGR7) protein is Adenylosuccinate synthetase.